A 273-amino-acid polypeptide reads, in one-letter code: Putative phosphoenolpyruvate synthase regulatory protein (273 aa).

153 to 160 (GVSRSGKT) contacts ADP.

It belongs to the pyruvate, phosphate/water dikinase regulatory protein family. PSRP subfamily.

It catalyses the reaction [pyruvate, water dikinase] + ADP = [pyruvate, water dikinase]-phosphate + AMP + H(+). The enzyme catalyses [pyruvate, water dikinase]-phosphate + phosphate + H(+) = [pyruvate, water dikinase] + diphosphate. Bifunctional serine/threonine kinase and phosphorylase involved in the regulation of the phosphoenolpyruvate synthase (PEPS) by catalyzing its phosphorylation/dephosphorylation. The chain is Putative phosphoenolpyruvate synthase regulatory protein from Polaromonas naphthalenivorans (strain CJ2).